The chain runs to 169 residues: Cell division inhibitor SulA (169 aa).

A ftsZ binding region spans residues 106 to 112; that stretch reads ALRTGNY. Residues 162–169 form a lon protease binding region; the sequence is KIHSNLYH.

The protein belongs to the SulA family. As to quaternary structure, interacts with FtsZ. In terms of processing, is rapidly cleaved and degraded by the Lon protease once DNA damage is repaired.

Component of the SOS system and an inhibitor of cell division. Accumulation of SulA causes rapid cessation of cell division and the appearance of long, non-septate filaments. In the presence of GTP, binds a polymerization-competent form of FtsZ in a 1:1 ratio, thus inhibiting FtsZ polymerization and therefore preventing it from participating in the assembly of the Z ring. This mechanism prevents the premature segregation of damaged DNA to daughter cells during cell division. The protein is Cell division inhibitor SulA of Citrobacter koseri (strain ATCC BAA-895 / CDC 4225-83 / SGSC4696).